The following is a 310-amino-acid chain: Malate dehydrogenase (310 aa).

Residues 7–13 (GAAGGIG) and aspartate 34 contribute to the NAD(+) site. Residues arginine 81 and arginine 87 each coordinate substrate. Residues asparagine 94 and 117 to 119 (ITN) contribute to the NAD(+) site. Residues asparagine 119 and arginine 153 each coordinate substrate. Catalysis depends on histidine 177, which acts as the Proton acceptor. Methionine 227 lines the NAD(+) pocket.

Belongs to the LDH/MDH superfamily. MDH type 1 family. As to quaternary structure, homodimer.

The enzyme catalyses (S)-malate + NAD(+) = oxaloacetate + NADH + H(+). Functionally, catalyzes the reversible oxidation of malate to oxaloacetate. This chain is Malate dehydrogenase, found in Vibrio vulnificus (strain YJ016).